Consider the following 1214-residue polypeptide: Zinc finger E-box-binding homeobox 2 (1214 aa).

The tract at residues 1–101 is disordered; sequence MKQPIMADGP…GVEHPWHNNE (101 aa). A compositionally biased stretch (basic residues) spans 12-24; that stretch reads CKRRKQANPRRKN. Residues 57–74 show a composition bias toward polar residues; sequence DQETSPASVPNHESSPHV. Residues 89 to 98 show a composition bias toward basic and acidic residues; that stretch reads REGGVEHPWH. S142 carries the phosphoserine modification. 3 consecutive C2H2-type zinc fingers follow at residues 211-234, 241-263, and 282-304; these read LTCP…KYRH, FSCP…MVTH, and FKCT…LRIH. The C2H2-type 4; atypical zinc finger occupies 310 to 334; the sequence is YECPNCKKRFSHSGSYSSHISSKKC. S356, S360, and S364 each carry phosphoserine. Residue K377 is modified to N6-acetyllysine. A Glycyl lysine isopeptide (Lys-Gly) (interchain with G-Cter in SUMO); alternate cross-link involves residue K391. Residue K391 forms a Glycyl lysine isopeptide (Lys-Gly) (interchain with G-Cter in SUMO2); alternate linkage. The tract at residues 437–487 is SMAD-MH2 binding domain; the sequence is QHLGVGMEAPLLGFPTMNSNLSEVQKVLQIVDNTVSRQKMDCKAEEISKLK. Residues K479 and K555 each participate in a glycyl lysine isopeptide (Lys-Gly) (interchain with G-Cter in SUMO2) cross-link. A C2H2-type 5; atypical zinc finger spans residues 581-605; that stretch reads FSCQFCKESFPGPIPLHQHERYLCK. Glycyl lysine isopeptide (Lys-Gly) (interchain with G-Cter in SUMO2) cross-links involve residues K611 and K632. The segment at residues 644–703 is a DNA-binding region (homeobox; atypical); sequence GMTSPINPYKDHMSVLKAYYAMNMEPNSDELLKISIAVGLPQEFVKEWFEQRKVYQYSNS. S647 carries the post-translational modification Phosphoserine. The span at 702-715 shows a compositional bias: low complexity; that stretch reads NSRSPSLERSSKPL. 3 disordered regions span residues 702-740, 771-810, and 832-857; these read NSRS…DSIT, PVEK…SSEE, and ATKN…ENSD. K713 participates in a covalent cross-link: Glycyl lysine isopeptide (Lys-Gly) (interchain with G-Cter in SUMO2). Residues S731 and S780 each carry the phosphoserine modification. 2 stretches are compositionally biased toward low complexity: residues 780 to 808 and 840 to 854; these read SNTP…SFSS and SSIS…SSSE. A Phosphothreonine modification is found at T782. S784 bears the Phosphoserine mark. K866 is covalently cross-linked (Glycyl lysine isopeptide (Lys-Gly) (interchain with G-Cter in SUMO); alternate). A Glycyl lysine isopeptide (Lys-Gly) (interchain with G-Cter in SUMO2); alternate cross-link involves residue K866. 2 C2H2-type zinc fingers span residues 999–1021 and 1027–1049; these read YACD…KYEH and HQCQ…SRLH. The segment at 1055–1076 adopts a C2H2-type 8; atypical zinc-finger fold; sequence YQCDKCGKRFSHSGSYSQHMNH. The disordered stretch occupies residues 1117 to 1214; the sequence is TPQGYSDSEE…HEEDNMEDGM (98 aa). Phosphoserine occurs at positions 1122 and 1124. Residues 1127–1155 are compositionally biased toward basic and acidic residues; the sequence is RESMPRDGESEKEHEKEGEDGYGKLGRQD. Residues 1156 to 1167 show a composition bias toward acidic residues; it reads GDEEFEEEEEES. 2 stretches are compositionally biased toward basic and acidic residues: residues 1168–1179 and 1186–1205; these read ENKSMDTDPETI and GDHS…KSDH. Residue S1203 is modified to Phosphoserine.

Belongs to the delta-EF1/ZFH-1 C2H2-type zinc-finger family. Binds activated SMAD1, activated SMAD2 and activated SMAD3; binding with SMAD4 is not detected. Interacts with CBX4 and CTBP1. Post-translationally, sumoylation on Lys-391 and Lys-866 is promoted by the E3 SUMO-protein ligase CBX4, and impairs interaction with CTBP1 and transcription repression activity.

Its subcellular location is the nucleus. It localises to the chromosome. Functionally, transcriptional inhibitor that binds to DNA sequence 5'-CACCT-3' in different promoters. Represses transcription of E-cadherin. Represses expression of MEOX2. The polypeptide is Zinc finger E-box-binding homeobox 2 (Homo sapiens (Human)).